The chain runs to 212 residues: MTPQSQPQETAVALIPYVIEQTSKGERSYDIYSRLLKDRIIILGTAVTDEVANSIIAQMLFLEVDNPEKPIHLYINSPGGSVSAGLAIYDFMQFVKCDVATYCMGMAASMGSLLLTAGTKGMRYSLPNTRIMIHQPLLSGGGLSGQVTDIEIHAKELVKTKEKLTRIYETHTGRDYDTLRAAMERDNFMDPYQAKEFGLLDHVVESRKAKKG.

Serine 109 acts as the Nucleophile in catalysis. Histidine 134 is an active-site residue.

Belongs to the peptidase S14 family. Fourteen ClpP subunits assemble into 2 heptameric rings which stack back to back to give a disk-like structure with a central cavity, resembling the structure of eukaryotic proteasomes.

The protein localises to the cytoplasm. It catalyses the reaction Hydrolysis of proteins to small peptides in the presence of ATP and magnesium. alpha-casein is the usual test substrate. In the absence of ATP, only oligopeptides shorter than five residues are hydrolyzed (such as succinyl-Leu-Tyr-|-NHMec, and Leu-Tyr-Leu-|-Tyr-Trp, in which cleavage of the -Tyr-|-Leu- and -Tyr-|-Trp bonds also occurs).. Cleaves peptides in various proteins in a process that requires ATP hydrolysis. Has a chymotrypsin-like activity. Plays a major role in the degradation of misfolded proteins. In Bdellovibrio bacteriovorus (strain ATCC 15356 / DSM 50701 / NCIMB 9529 / HD100), this protein is ATP-dependent Clp protease proteolytic subunit.